The following is an 82-amino-acid chain: Large ribosomal subunit protein bL28 (82 aa).

This sequence belongs to the bacterial ribosomal protein bL28 family.

The protein is Large ribosomal subunit protein bL28 of Vesicomyosocius okutanii subsp. Calyptogena okutanii (strain HA).